Here is a 471-residue protein sequence, read N- to C-terminus: ATP synthase subunit beta (471 aa).

153 to 160 provides a ligand contact to ATP; the sequence is GGAGVGKT.

Belongs to the ATPase alpha/beta chains family. As to quaternary structure, F-type ATPases have 2 components, CF(1) - the catalytic core - and CF(0) - the membrane proton channel. CF(1) has five subunits: alpha(3), beta(3), gamma(1), delta(1), epsilon(1). CF(0) has four main subunits: a(1), b(1), b'(1) and c(9-12).

It localises to the cell membrane. It carries out the reaction ATP + H2O + 4 H(+)(in) = ADP + phosphate + 5 H(+)(out). Functionally, produces ATP from ADP in the presence of a proton gradient across the membrane. The catalytic sites are hosted primarily by the beta subunits. This Chloroflexus aurantiacus (strain ATCC 29364 / DSM 637 / Y-400-fl) protein is ATP synthase subunit beta.